The chain runs to 124 residues: MIIKEAKDAKRGRVHSRIRKKMEGTPERPRLNVYRSTNHLYVQVIDDSKGATLVAANTLEFGEAKEGKRPTGGNLSAAKQLGKAIAERAKQKGINKVVFDRGGYLYHGRIKALADAAREGGLEF.

This sequence belongs to the universal ribosomal protein uL18 family. As to quaternary structure, part of the 50S ribosomal subunit; part of the 5S rRNA/L5/L18/L25 subcomplex. Contacts the 5S and 23S rRNAs.

In terms of biological role, this is one of the proteins that bind and probably mediate the attachment of the 5S RNA into the large ribosomal subunit, where it forms part of the central protuberance. This chain is Large ribosomal subunit protein uL18, found in Koribacter versatilis (strain Ellin345).